A 210-amino-acid polypeptide reads, in one-letter code: Somatotropin (210 aa).

Residues 1–23 form the signal peptide; it reads MARALVLLSVVLVSLLVNQGTAS. H38 contacts Zn(2+). A disulfide bond links C71 and C183. E192 is a Zn(2+) binding site. C200 and C208 are disulfide-bonded.

It belongs to the somatotropin/prolactin family.

It is found in the secreted. In terms of biological role, growth hormone plays an important role in growth control. The polypeptide is Somatotropin (gh) (Ctenopharyngodon idella (Grass carp)).